The following is an 883-amino-acid chain: Alanine--tRNA ligase (883 aa).

Histidine 563, histidine 567, cysteine 673, and histidine 677 together coordinate Zn(2+).

It belongs to the class-II aminoacyl-tRNA synthetase family. It depends on Zn(2+) as a cofactor.

The protein resides in the cytoplasm. The enzyme catalyses tRNA(Ala) + L-alanine + ATP = L-alanyl-tRNA(Ala) + AMP + diphosphate. In terms of biological role, catalyzes the attachment of alanine to tRNA(Ala) in a two-step reaction: alanine is first activated by ATP to form Ala-AMP and then transferred to the acceptor end of tRNA(Ala). Also edits incorrectly charged Ser-tRNA(Ala) and Gly-tRNA(Ala) via its editing domain. This Caulobacter sp. (strain K31) protein is Alanine--tRNA ligase.